Here is a 450-residue protein sequence, read N- to C-terminus: Cyclic GMP-AMP phosphodiesterase SMPDL3A (450 aa).

The signal sequence occupies residues 1-22; sequence MARLGALVCCLLAAWHCRPGLG. Zn(2+)-binding residues include D42 and H44. Cysteines 59 and 78 form a disulfide. A Zn(2+)-binding site is contributed by D107. H111 serves as a coordination point for ATP. Residues N124 and N128 are each glycosylated (N-linked (GlcNAc...) asparagine). N148 contributes to the Zn(2+) binding site. ATP-binding residues include N148 and H149. N219 and N235 each carry an N-linked (GlcNAc...) asparagine glycan. Residues H249, H290, and H292 each contribute to the Zn(2+) site. N-linked (GlcNAc...) asparagine glycosylation is found at N353 and N370. Cystine bridges form between C417/C421 and C427/C440.

Belongs to the acid sphingomyelinase family. As to quaternary structure, monomer. Homodimer; homodimerizes following 2',3'-cGAMP-binding. Zn(2+) serves as cofactor.

It is found in the secreted. It catalyses the reaction 2',3'-cGAMP + H2O = 5'-pGpA(2'-5') + H(+). The catalysed reaction is 5'-pGpA(2'-5') + H2O = 5'-GpA(2'-5') + phosphate. It carries out the reaction a ribonucleoside 5'-triphosphate + H2O = a ribonucleoside 5'-diphosphate + phosphate + H(+). The enzyme catalyses ATP + H2O = ADP + phosphate + H(+). Cyclic-nucleotide phosphodiesterase that acts as a negative regulator of innate immunity by mediating degradation of 2',3'-cGAMP, thereby inhibiting the cGAS-STING signaling. Specifically linearizes 2',3'-cGAMP into 2'5'-bond pGpA and further hydrolyzes pGpA to produce GpA. Also has in vitro nucleotide phosphodiesterase activity with nucleoside triphosphates, such as ATP. Has in vitro activity with p-nitrophenyl-TMP. Has lower activity with nucleoside diphosphates, and no activity with nucleoside monophosphates. Has in vitro activity with CDP-choline, giving rise to CMP and phosphocholine. Has in vitro activity with CDP-ethanolamine. Does not have sphingomyelin phosphodiesterase activity. The protein is Cyclic GMP-AMP phosphodiesterase SMPDL3A (SMPDL3A) of Bos taurus (Bovine).